The primary structure comprises 1012 residues: F-box DNA helicase 1 (1012 aa).

Residues 1 to 54 are disordered; that stretch reads MHLTADDCEALSRSTEGLSSLTQPLNQRRSRGDVNRGLQPTHRTRTQPGAQGRQ. Positions 12-27 are enriched in polar residues; the sequence is SRSTEGLSSLTQPLNQ. Residues 185 to 234 form the F-box domain; that stretch reads QGSIEDLPDEVLRSIFAFLPVTDLYQSLSLVCRRWRIIVGDPWFIPWKKL. The 266-residue stretch at 427–692 folds into the UvrD-like helicase ATP-binding domain; sequence THEQQRILNH…YYLTQSFRFG (266 aa). 448–455 provides a ligand contact to ATP; it reads AFAGTGKT.

Belongs to the helicase family. UvrD subfamily. In terms of assembly, part of the SCF (SKP1-CUL1-F-box) E3 ubiquitin-protein ligase complex SCF(FBH1).

It is found in the nucleus. It localises to the chromosome. It catalyses the reaction Couples ATP hydrolysis with the unwinding of duplex DNA by translocating in the 3'-5' direction.. The enzyme catalyses ATP + H2O = ADP + phosphate + H(+). Its pathway is protein modification; protein ubiquitination. 3'-5' DNA helicase and substrate-recognition component of the SCF(FBH1) E3 ubiquitin ligase complex that plays a key role in response to stalled/damaged replication forks. Involved in genome maintenance by acting as an anti-recombinogenic helicase and preventing extensive strand exchange during homologous recombination: promotes RAD51 filament dissolution from stalled forks, thereby inhibiting homologous recombination and preventing excessive recombination. Also promotes cell death and DNA double-strand breakage in response to replication stress: promotes the endonucleolytic DNA cleavage following prolonged replication stress via its helicase activity, possibly to eliminate cells with excessive replication stress. The protein is F-box DNA helicase 1 of Gallus gallus (Chicken).